We begin with the raw amino-acid sequence, 317 residues long: Methionyl-tRNA formyltransferase (317 aa).

117-120 (SLLP) is a (6S)-5,6,7,8-tetrahydrofolate binding site.

Belongs to the Fmt family.

It carries out the reaction L-methionyl-tRNA(fMet) + (6R)-10-formyltetrahydrofolate = N-formyl-L-methionyl-tRNA(fMet) + (6S)-5,6,7,8-tetrahydrofolate + H(+). Its function is as follows. Attaches a formyl group to the free amino group of methionyl-tRNA(fMet). The formyl group appears to play a dual role in the initiator identity of N-formylmethionyl-tRNA by promoting its recognition by IF2 and preventing the misappropriation of this tRNA by the elongation apparatus. This is Methionyl-tRNA formyltransferase from Herminiimonas arsenicoxydans.